The primary structure comprises 746 residues: Polyribonucleotide nucleotidyltransferase (746 aa).

Mg(2+) is bound by residues aspartate 515 and aspartate 521. A KH domain is found at 581-640; that stretch reads PRVIAVKIPVDKIGEVIGPKGKMINQIQEDTGADISIEDDGTVYIGATNGPSADAARSAI. In terms of domain architecture, S1 motif spans 652 to 724; the sequence is GERYLGTVVK…DRGKLSLSPV (73 aa).

The protein belongs to the polyribonucleotide nucleotidyltransferase family. Mg(2+) serves as cofactor.

Its subcellular location is the cytoplasm. The catalysed reaction is RNA(n+1) + phosphate = RNA(n) + a ribonucleoside 5'-diphosphate. Involved in mRNA degradation. Catalyzes the phosphorolysis of single-stranded polyribonucleotides processively in the 3'- to 5'-direction. The protein is Polyribonucleotide nucleotidyltransferase of Renibacterium salmoninarum (strain ATCC 33209 / DSM 20767 / JCM 11484 / NBRC 15589 / NCIMB 2235).